Reading from the N-terminus, the 372-residue chain is UDP-N-acetylglucosamine--N-acetylmuramyl-(pentapeptide) pyrophosphoryl-undecaprenol N-acetylglucosamine transferase (372 aa).

UDP-N-acetyl-alpha-D-glucosamine-binding positions include 15–17, Asn-126, Arg-169, Ser-197, and Gln-299; that span reads TGG.

The protein belongs to the glycosyltransferase 28 family. MurG subfamily.

Its subcellular location is the cell inner membrane. It carries out the reaction di-trans,octa-cis-undecaprenyl diphospho-N-acetyl-alpha-D-muramoyl-L-alanyl-D-glutamyl-meso-2,6-diaminopimeloyl-D-alanyl-D-alanine + UDP-N-acetyl-alpha-D-glucosamine = di-trans,octa-cis-undecaprenyl diphospho-[N-acetyl-alpha-D-glucosaminyl-(1-&gt;4)]-N-acetyl-alpha-D-muramoyl-L-alanyl-D-glutamyl-meso-2,6-diaminopimeloyl-D-alanyl-D-alanine + UDP + H(+). Its pathway is cell wall biogenesis; peptidoglycan biosynthesis. Functionally, cell wall formation. Catalyzes the transfer of a GlcNAc subunit on undecaprenyl-pyrophosphoryl-MurNAc-pentapeptide (lipid intermediate I) to form undecaprenyl-pyrophosphoryl-MurNAc-(pentapeptide)GlcNAc (lipid intermediate II). In Methylobacterium sp. (strain 4-46), this protein is UDP-N-acetylglucosamine--N-acetylmuramyl-(pentapeptide) pyrophosphoryl-undecaprenol N-acetylglucosamine transferase.